We begin with the raw amino-acid sequence, 421 residues long: UDP-N-acetylglucosamine 1-carboxyvinyltransferase 1 (421 aa).

Residue 22–23 (KN) coordinates phosphoenolpyruvate. Arg95 is a UDP-N-acetyl-alpha-D-glucosamine binding site. Cys119 functions as the Proton donor in the catalytic mechanism. Cys119 carries the 2-(S-cysteinyl)pyruvic acid O-phosphothioketal modification. Residues 124–128 (RPIEQ), Asp308, and Val330 each bind UDP-N-acetyl-alpha-D-glucosamine.

This sequence belongs to the EPSP synthase family. MurA subfamily.

The protein resides in the cytoplasm. The catalysed reaction is phosphoenolpyruvate + UDP-N-acetyl-alpha-D-glucosamine = UDP-N-acetyl-3-O-(1-carboxyvinyl)-alpha-D-glucosamine + phosphate. The protein operates within cell wall biogenesis; peptidoglycan biosynthesis. Cell wall formation. Adds enolpyruvyl to UDP-N-acetylglucosamine. This chain is UDP-N-acetylglucosamine 1-carboxyvinyltransferase 1, found in Staphylococcus aureus (strain bovine RF122 / ET3-1).